We begin with the raw amino-acid sequence, 299 residues long: Sulfate adenylyltransferase subunit 2 (299 aa).

The protein belongs to the PAPS reductase family. CysD subfamily. In terms of assembly, heterodimer composed of CysD, the smaller subunit, and CysN.

It catalyses the reaction sulfate + ATP + H(+) = adenosine 5'-phosphosulfate + diphosphate. The protein operates within sulfur metabolism; hydrogen sulfide biosynthesis; sulfite from sulfate: step 1/3. Functionally, with CysN forms the ATP sulfurylase (ATPS) that catalyzes the adenylation of sulfate producing adenosine 5'-phosphosulfate (APS) and diphosphate, the first enzymatic step in sulfur assimilation pathway. APS synthesis involves the formation of a high-energy phosphoric-sulfuric acid anhydride bond driven by GTP hydrolysis by CysN coupled to ATP hydrolysis by CysD. The protein is Sulfate adenylyltransferase subunit 2 of Colwellia psychrerythraea (strain 34H / ATCC BAA-681) (Vibrio psychroerythus).